The sequence spans 273 residues: Bidirectional sugar transporter SWEET1a (273 aa).

Residues 1–6 (MEHIAR) are Extracellular-facing. Residues 7–27 (FFFGVSGNVIALFLFLSPVVT) form a helical membrane-spanning segment. A MtN3/slv 1 domain is found at 7-95 (FFFGVSGNVI…VIFLIFAERK (89 aa)). Residues 28-42 (FWRIIKKRSTEDFSG) are Cytoplasmic-facing. A helical membrane pass occupies residues 43–63 (VPYNMTLLNCLLSAWYGLPFV). Over 64-71 (SPNNILVT) the chain is Extracellular. Residues 72-92 (TINGTGSVIEAIYVVIFLIFA) form a helical membrane-spanning segment. Over 93–101 (ERKARLKMM) the chain is Cytoplasmic. Residues 102 to 122 (GLLGLVTSIFTMVVLVSLLAL) form a helical membrane-spanning segment. The Extracellular segment spans residues 123–128 (HGQGRK). The chain crosses the membrane as a helical span at residues 129–149 (LFCGLAATIFSICMYASPLSI). Residues 131 to 214 (CGLAATIFSI…ILYAIYRNHK (84 aa)) form the MtN3/slv 2 domain. Over 150-163 (MRLVIKTKSVEFMP) the chain is Cytoplasmic. A helical transmembrane segment spans residues 164 to 184 (FLLSLSVFLCGTSWFIYGLLG). The Extracellular segment spans residues 185 to 188 (RDPF). A helical membrane pass occupies residues 189 to 209 (IAIPNGCGSFLGLMQLILYAI). The Cytoplasmic portion of the chain corresponds to 210-273 (YRNHKGATPA…SADDKVASQV (64 aa)).

This sequence belongs to the SWEET sugar transporter family. As to quaternary structure, forms homooligomers and/or heterooligomers.

Its subcellular location is the cell membrane. Mediates both low-affinity uptake and efflux of sugar across the plasma membrane. The polypeptide is Bidirectional sugar transporter SWEET1a (SWEET1A) (Oryza sativa subsp. japonica (Rice)).